A 312-amino-acid chain; its full sequence is Methionyl-tRNA formyltransferase (312 aa).

Position 112-115 (112-115 (SLLP)) interacts with (6S)-5,6,7,8-tetrahydrofolate.

It belongs to the Fmt family.

The catalysed reaction is L-methionyl-tRNA(fMet) + (6R)-10-formyltetrahydrofolate = N-formyl-L-methionyl-tRNA(fMet) + (6S)-5,6,7,8-tetrahydrofolate + H(+). Attaches a formyl group to the free amino group of methionyl-tRNA(fMet). The formyl group appears to play a dual role in the initiator identity of N-formylmethionyl-tRNA by promoting its recognition by IF2 and preventing the misappropriation of this tRNA by the elongation apparatus. The sequence is that of Methionyl-tRNA formyltransferase from Dehalococcoides mccartyi (strain ATCC BAA-2266 / KCTC 15142 / 195) (Dehalococcoides ethenogenes (strain 195)).